Here is a 290-residue protein sequence, read N- to C-terminus: Translin-associated protein X (290 aa).

The disordered stretch occupies residues 1-31 (MNGKEGPGGFRKRKHDTFPHNQRREGKDASL). The span at 16 to 28 (DTFPHNQRREGKD) shows a compositional bias: basic and acidic residues. Residues 73–208 (LLHRITSAPD…MRMCINSVGN (136 aa)) are interaction with C1D. Positions 129 and 197 each coordinate Mg(2+). Residue K279 forms a Glycyl lysine isopeptide (Lys-Gly) (interchain with G-Cter in SUMO2) linkage.

The protein belongs to the translin family. As to quaternary structure, ring-shaped heterooctamer of six TSN and two TSNAX subunits. Interacts with GOLGA3, TSNAXIP1, SUN1 and AKAP9. Interacts with the homodimeric form of C1D following gamma-radiation. Interacts with TSN and C1D in a mutually exclusive manner. In terms of processing, sumoylated with SUMO1. Detected in heart, brain, lung, liver, kidney and testis.

It localises to the cytoplasm. The protein resides in the perinuclear region. It is found in the golgi apparatus. The protein localises to the nucleus. In terms of biological role, acts in combination with TSN as an endonuclease involved in the activation of the RNA-induced silencing complex (RISC). Possible role in spermatogenesis. The polypeptide is Translin-associated protein X (Tsnax) (Mus musculus (Mouse)).